A 295-amino-acid chain; its full sequence is Ethanolamine ammonia-lyase small subunit (295 aa).

Residues Val208 and Glu229 each contribute to the adenosylcob(III)alamin site.

The protein belongs to the EutC family. As to quaternary structure, the basic unit is a heterodimer which dimerizes to form tetramers. The heterotetramers trimerize; 6 large subunits form a core ring with 6 small subunits projecting outwards. The cofactor is adenosylcob(III)alamin.

The protein localises to the bacterial microcompartment. It carries out the reaction ethanolamine = acetaldehyde + NH4(+). Its pathway is amine and polyamine degradation; ethanolamine degradation. Catalyzes the deamination of various vicinal amino-alcohols to oxo compounds. Allows this organism to utilize ethanolamine as the sole source of nitrogen and carbon in the presence of external vitamin B12. In Fusobacterium nucleatum subsp. nucleatum (strain ATCC 25586 / DSM 15643 / BCRC 10681 / CIP 101130 / JCM 8532 / KCTC 2640 / LMG 13131 / VPI 4355), this protein is Ethanolamine ammonia-lyase small subunit.